Reading from the N-terminus, the 147-residue chain is Small nuclear ribonucleoprotein-associated protein B (147 aa).

Positions 1–84 (MGTTKMVSLL…IVSLSVQGPP (84 aa)) constitute a Sm domain. Disordered stretches follow at residues 87-106 (DPSMRGSLLSGPGVARPAGR) and 128-147 (APPPPAGFGRGAPPPGFRPV).

The protein belongs to the snRNP SmB/SmN family. As to quaternary structure, belongs to the 40S cdc5-associated complex (or cwf complex), a spliceosome sub-complex reminiscent of a late-stage spliceosome composed of the U2, U5 and U6 snRNAs and at least brr2, cdc5, cwf2/prp3, cwf3/syf1, cwf4/syf3, cwf5/ecm2, spp42/cwf6, cwf7/spf27, cwf8, cwf9, cwf10, cwf11, cwf12, prp45/cwf13, cwf14, cwf15, cwf16, cwf17, cwf18, cwf19, cwf20, cwf21, cwf22, cwf23, cwf24, cwf25, cwf26, cyp7/cwf27, cwf28, cwf29/ist3, lea1, msl1, prp5/cwf1, prp10, prp12/sap130, prp17, prp22, sap61, sap62, sap114, sap145, slu7, smb1, smd1, smd3, smf1, smg1 and syf2.

Its subcellular location is the nucleus. It localises to the cytoplasm. In terms of biological role, plays a role in pre-mRNA splicing as a core component of the spliceosomal U1, U2, U4 and U5 small nuclear ribonucleoproteins (snRNPs), the building blocks of the spliceosome. The polypeptide is Small nuclear ribonucleoprotein-associated protein B (smb1) (Schizosaccharomyces pombe (strain 972 / ATCC 24843) (Fission yeast)).